Here is a 255-residue protein sequence, read N- to C-terminus: MKVLATSFVLGSLGLAFYLPLVVTTPKTLAIPEKLQEAVGKVIINATTCTVTCGLGYKEETVCEVGPDGVRRKCQTRRLECLTNWICGMLHFTILIGKEFELSCLSSDILEFGQEAFRFTWRLARGVISTDDEVFKPFQANSHFVKFKYAQEYDSGTYRCDVQLVKNLRLVKRLYFGLRVLPPNLVNLNFHQSLTEDQKLIDEGLEVNLDSYSKPHHPKWKKKVASALGIGIAIGVVGGVLVRIVLCALRGGLQQ.

Residues 1–30 (MKVLATSFVLGSLGLAFYLPLVVTTPKTLA) form the signal peptide. Residues 31 to 226 (IPEKLQEAVG…HPKWKKKVAS (196 aa)) lie on the Extracellular side of the membrane. The N-linked (GlcNAc...) asparagine glycan is linked to N45. The region spanning 83–171 (TNWICGMLHF…VQLVKNLRLV (89 aa)) is the Ig-like domain. C104 and C160 form a disulfide bridge. A helical transmembrane segment spans residues 227-247 (ALGIGIAIGVVGGVLVRIVLC). Topologically, residues 248–255 (ALRGGLQQ) are cytoplasmic.

As to quaternary structure, forms a complex with IZUMO1 and SPACA6 on spermatocyte cell membrane required for fertilization. As to expression, highly expressed in sperm (at protein level).

It localises to the cell membrane. Its function is as follows. Essential fertilization factor required for male fertility. Part of a conserved trimeric sperm complex with the essential fertilization factors IZUMO1 and SPACA6 which bridges sperm and oocyte membranes during fertilization by binding to IZUMO1R/JUNO on the oocyte. The chain is Transmembrane protein 81 from Homo sapiens (Human).